A 299-amino-acid polypeptide reads, in one-letter code: Pyridoxal 5'-phosphate synthase subunit PdxS (299 aa).

Residue aspartate 24 participates in D-ribose 5-phosphate binding. The active-site Schiff-base intermediate with D-ribose 5-phosphate is the lysine 81. Position 153 (glycine 153) interacts with D-ribose 5-phosphate. Arginine 165 is a D-glyceraldehyde 3-phosphate binding site. Residues glycine 219 and glycine 240–serine 241 contribute to the D-ribose 5-phosphate site.

This sequence belongs to the PdxS/SNZ family. As to quaternary structure, in the presence of PdxT, forms a dodecamer of heterodimers.

It carries out the reaction aldehydo-D-ribose 5-phosphate + D-glyceraldehyde 3-phosphate + L-glutamine = pyridoxal 5'-phosphate + L-glutamate + phosphate + 3 H2O + H(+). It participates in cofactor biosynthesis; pyridoxal 5'-phosphate biosynthesis. Its function is as follows. Catalyzes the formation of pyridoxal 5'-phosphate from ribose 5-phosphate (RBP), glyceraldehyde 3-phosphate (G3P) and ammonia. The ammonia is provided by the PdxT subunit. Can also use ribulose 5-phosphate and dihydroxyacetone phosphate as substrates, resulting from enzyme-catalyzed isomerization of RBP and G3P, respectively. The polypeptide is Pyridoxal 5'-phosphate synthase subunit PdxS (Methanococcus aeolicus (strain ATCC BAA-1280 / DSM 17508 / OCM 812 / Nankai-3)).